Reading from the N-terminus, the 478-residue chain is Glycogen synthase (478 aa).

An ADP-alpha-D-glucose-binding site is contributed by Lys-15.

This sequence belongs to the glycosyltransferase 1 family. Bacterial/plant glycogen synthase subfamily.

The catalysed reaction is [(1-&gt;4)-alpha-D-glucosyl](n) + ADP-alpha-D-glucose = [(1-&gt;4)-alpha-D-glucosyl](n+1) + ADP + H(+). The protein operates within glycan biosynthesis; glycogen biosynthesis. Functionally, synthesizes alpha-1,4-glucan chains using ADP-glucose. This is Glycogen synthase from Streptococcus uberis (strain ATCC BAA-854 / 0140J).